Here is a 333-residue protein sequence, read N- to C-terminus: Fatty acid hydroxylase domain-containing protein 2 (333 aa).

A run of 6 helical transmembrane segments spans residues 29 to 49 (FILGSGLLSFVAFWNSVTWHL), 77 to 97 (ILFFIGAIQVPCLFFWSFNGL), 134 to 154 (TVLFNQCMISFPMVVFLYPFL), 168 to 188 (FHWFLLELAIFTLIEEVLFYY), 215 to 235 (VISLYAHPIEHAVSNMLPVIV), and 237 to 257 (PLVMGSHLSSITMWFSLALII). The region spanning 176-299 (AIFTLIEEVL…LGVLDHLHGT (124 aa)) is the Fatty acid hydroxylase domain.

This sequence belongs to the sterol desaturase family. Down-regulated in primary acute myeloid leukemia (AML) patients.

It is found in the cytoplasm. The protein localises to the membrane. Functionally, promotes megakaryocyte differentiation by enhancing ERK phosphorylation and up-regulating RUNX1 expression. In Homo sapiens (Human), this protein is Fatty acid hydroxylase domain-containing protein 2 (FAXDC2).